The primary structure comprises 622 residues: Coiled-coil domain-containing protein 17 (622 aa).

Coiled coils occupy residues 81–102 (RSAL…QEMR), 146–207 (ARRV…LEVL), and 294–320 (GELP…RGRA). 2 disordered regions span residues 334–356 (SLQP…PLPP) and 584–622 (PAVG…PVSF). The span at 344–356 (PLLPPPVAPPLPP) shows a compositional bias: pro residues. The segment covering 593–615 (PRTEEPLSGVKDRDEGLGPHHSS) has biased composition (basic and acidic residues).

The protein is Coiled-coil domain-containing protein 17 (CCDC17) of Homo sapiens (Human).